A 138-amino-acid polypeptide reads, in one-letter code: Cysteine desulfuration protein SufE (138 aa).

The active-site Cysteine persulfide intermediate is the C51.

The protein belongs to the SufE family. Homodimer. Interacts with SufS.

The protein localises to the cytoplasm. The protein operates within cofactor biosynthesis; iron-sulfur cluster biosynthesis. Participates in cysteine desulfuration mediated by SufS. Cysteine desulfuration mobilizes sulfur from L-cysteine to yield L-alanine and constitutes an essential step in sulfur metabolism for biosynthesis of a variety of sulfur-containing biomolecules. Functions as a sulfur acceptor for SufS, by mediating the direct transfer of the sulfur atom from the S-sulfanylcysteine of SufS, an intermediate product of cysteine desulfuration process. The chain is Cysteine desulfuration protein SufE from Salmonella dublin (strain CT_02021853).